Here is a 291-residue protein sequence, read N- to C-terminus: Sulfotransferase 1A1 (291 aa).

44-49 (KSGTTW) contributes to the 3'-phosphoadenylyl sulfate binding site. 102-104 (KTH) serves as a coordination point for substrate. The active-site Proton acceptor is the H104. 3'-phosphoadenylyl sulfate-binding positions include R126, S134, Y189, 223–228 (TSFKKM), and 251–255 (FMRKG). S134 carries the post-translational modification Phosphoserine.

Belongs to the sulfotransferase 1 family. Homodimer. Post-translationally, the N-terminus is blocked. In terms of tissue distribution, liver, kidney, heart and colon.

Its subcellular location is the cytoplasm. It carries out the reaction a phenol + 3'-phosphoadenylyl sulfate = an aryl sulfate + adenosine 3',5'-bisphosphate + H(+). The catalysed reaction is 17beta-estradiol + 3'-phosphoadenylyl sulfate = 17beta-estradiol 3-sulfate + adenosine 3',5'-bisphosphate + H(+). It catalyses the reaction 4-ethylphenol + 3'-phosphoadenylyl sulfate = 4-ethylphenyl sulfate + adenosine 3',5'-bisphosphate + H(+). The enzyme catalyses 4-nitrophenol + 3'-phosphoadenylyl sulfate = 4-nitrophenyl sulfate + adenosine 3',5'-bisphosphate. It carries out the reaction dopamine + 3'-phosphoadenylyl sulfate = dopamine 3-O-sulfate + adenosine 3',5'-bisphosphate + H(+). The catalysed reaction is dopamine + 3'-phosphoadenylyl sulfate = dopamine 4-O-sulfate + adenosine 3',5'-bisphosphate + H(+). It catalyses the reaction 3,3',5-triiodo-L-thyronine + 3'-phosphoadenylyl sulfate = 3,3',5-triiodo-L-thyronine sulfate + adenosine 3',5'-bisphosphate + H(+). The enzyme catalyses 3,3',5'-triiodo-L-thyronine + 3'-phosphoadenylyl sulfate = 3,3',5'-triiodo-L-thyronine sulfate + adenosine 3',5'-bisphosphate + H(+). It carries out the reaction 3,3'-diiodo-L-thyronine + 3'-phosphoadenylyl sulfate = 3,3'-diiodo-L-thyronine sulfate + adenosine 3',5'-bisphosphate + H(+). The catalysed reaction is L-thyroxine + 3'-phosphoadenylyl sulfate = L-thyroxine sulfate + adenosine 3',5'-bisphosphate + H(+). Its function is as follows. Sulfotransferase that utilizes 3'-phospho-5'-adenylyl sulfate (PAPS) as sulfonate donor to catalyze the sulfate conjugation of a wide variety of acceptor molecules bearing a hydroxyl or an amine group. Sulfonation increases the water solubility of most compounds, and therefore their renal excretion, but it can also result in bioactivation to form active metabolites. Displays broad substrate specificity for small phenolic compounds. Plays an important roles in the sulfonation of endogenous molecules such as steroid hormones. Mediates the sulfate conjugation of a variety of xenobiotics, including the drugs acetaminophen and minoxidil. Mediates also the metabolic activation of carcinogenic N-hydroxyarylamines leading to highly reactive intermediates capable of forming DNA adducts, potentially resulting in mutagenesis. May play a role in gut microbiota-host metabolic interaction. O-sulfonates 4-ethylphenol (4-EP), a dietary tyrosine-derived metabolite produced by gut bacteria. The product 4-EPS crosses the blood-brain barrier and may negatively regulate oligodendrocyte maturation and myelination, affecting the functional connectivity of different brain regions associated with the limbic system. Catalyzes the sulfate conjugation of dopamine. Catalyzes the sulfation of T4 (L-thyroxine/3,5,3',5'-tetraiodothyronine), T3 (3,5,3'-triiodothyronine), rT3 (3,3',5'-triiodothyronine) and 3,3'-T2 (3,3'-diiodothyronine), with a substrate preference of 3,3'-T2 &gt; rT3 &gt; T3 &gt; T4. The chain is Sulfotransferase 1A1 (Sult1a1) from Rattus norvegicus (Rat).